The chain runs to 930 residues: Endoplasmic reticulum aminopeptidase 1 (930 aa).

Residues 1-2 lie on the Cytoplasmic side of the membrane; it reads MP. Residues 3 to 23 traverse the membrane as a helical; Signal-anchor for type II membrane protein segment; that stretch reads SLLSLVLTFLAVSSPSCCQNS. The Lumenal portion of the chain corresponds to 24–930; it reads DTASPKASNG…WLQKERQELL (907 aa). Asn-59 and Asn-143 each carry an N-linked (GlcNAc...) asparagine glycan. Substrate-binding positions include Glu-172 and 306-310; that span reads GAMEN. Residue His-342 coordinates Zn(2+). Glu-343 (proton acceptor) is an active-site residue. Zn(2+) is bound by residues His-346 and Glu-365. An intrachain disulfide couples Cys-393 to Cys-432. Residues Asn-403 and Asn-655 are each glycosylated (N-linked (GlcNAc...) asparagine). Cys-725 and Cys-732 form a disulfide bridge. Residues Asn-749 and Asn-890 are each glycosylated (N-linked (GlcNAc...) asparagine).

The protein belongs to the peptidase M1 family. In terms of assembly, monomer. May also exist as a heterodimer; with ERAP2. Interacts with RBMX. Zn(2+) is required as a cofactor. Post-translationally, N-glycosylated. In terms of tissue distribution, ubiquitous.

The protein resides in the endoplasmic reticulum membrane. Aminopeptidase that plays a central role in peptide trimming, a step required for the generation of most HLA class I-binding peptides. Peptide trimming is essential to customize longer precursor peptides to fit them to the correct length required for presentation on MHC class I molecules. Strongly prefers substrates 9-16 residues long. Rapidly degrades 13-mer to a 9-mer and then stops. Preferentially hydrolyzes the residue Leu and peptides with a hydrophobic C-terminus, while it has weak activity toward peptides with charged C-terminus. May play a role in the inactivation of peptide hormones. May be involved in the regulation of blood pressure through the inactivation of angiotensin II and/or the generation of bradykinin in the kidney. This is Endoplasmic reticulum aminopeptidase 1 (Erap1) from Rattus norvegicus (Rat).